The primary structure comprises 169 residues: Pyrophosphate-energized proton pump 1 (169 aa).

Helical transmembrane passes span 45 to 65 (YVVA…GIAM), 114 to 134 (VIPS…VLLI), and 141 to 161 (AFAA…LVAI).

It belongs to the H(+)-translocating pyrophosphatase (TC 3.A.10) family. Homodimer. It depends on Mg(2+) as a cofactor.

Its subcellular location is the cell inner membrane. It carries out the reaction diphosphate + H2O + H(+)(in) = 2 phosphate + 2 H(+)(out). Its function is as follows. Proton pump that utilizes the energy of pyrophosphate hydrolysis as the driving force for proton movement across the membrane. Generates a proton motive force. The sequence is that of Pyrophosphate-energized proton pump 1 (hppA1) from Rhizobium leguminosarum bv. trifolii.